Reading from the N-terminus, the 253-residue chain is 5'/3'-nucleotidase SurE (253 aa).

A divalent metal cation is bound by residues Asp-8, Asp-9, Ser-39, and Asn-92.

It belongs to the SurE nucleotidase family. A divalent metal cation serves as cofactor.

It localises to the cytoplasm. The enzyme catalyses a ribonucleoside 5'-phosphate + H2O = a ribonucleoside + phosphate. The catalysed reaction is a ribonucleoside 3'-phosphate + H2O = a ribonucleoside + phosphate. It carries out the reaction [phosphate](n) + H2O = [phosphate](n-1) + phosphate + H(+). Functionally, nucleotidase with a broad substrate specificity as it can dephosphorylate various ribo- and deoxyribonucleoside 5'-monophosphates and ribonucleoside 3'-monophosphates with highest affinity to 3'-AMP. Also hydrolyzes polyphosphate (exopolyphosphatase activity) with the preference for short-chain-length substrates (P20-25). Might be involved in the regulation of dNTP and NTP pools, and in the turnover of 3'-mononucleotides produced by numerous intracellular RNases (T1, T2, and F) during the degradation of various RNAs. The sequence is that of 5'/3'-nucleotidase SurE from Escherichia coli O17:K52:H18 (strain UMN026 / ExPEC).